Consider the following 472-residue polypeptide: GTPase Der (472 aa).

2 consecutive EngA-type G domains span residues 3 to 166 (PIIA…IQNN) and 188 to 361 (IKLA…HCST). Residues 9–16 (GRPNVGKS), 56–60 (DTGGI), 118–121 (NKID), 194–201 (GSSNVGKS), 241–245 (DTAGL), and 306–309 (NKWD) contribute to the GTP site. In terms of domain architecture, KH-like spans 362–446 (KRISTALLTK…PIRIQFNEPA (85 aa)).

This sequence belongs to the TRAFAC class TrmE-Era-EngA-EngB-Septin-like GTPase superfamily. EngA (Der) GTPase family. As to quaternary structure, associates with the 50S ribosomal subunit.

GTPase that plays an essential role in the late steps of ribosome biogenesis. The chain is GTPase Der from Baumannia cicadellinicola subsp. Homalodisca coagulata.